Reading from the N-terminus, the 148-residue chain is Large ribosomal subunit protein uL15 (148 aa).

The interval 1-57 (MRLHDLYPFPEERKTRKRVGRGSGSGLGCTSGKGNKGQNARAGGGVRPGFEGGQMPL) is disordered. Composition is skewed to gly residues over residues 21–35 (RGSG…GKGN) and 42–52 (AGGGVRPGFEG).

It belongs to the universal ribosomal protein uL15 family. In terms of assembly, part of the 50S ribosomal subunit.

Its function is as follows. Binds to the 23S rRNA. This is Large ribosomal subunit protein uL15 from Nitratidesulfovibrio vulgaris (strain ATCC 29579 / DSM 644 / CCUG 34227 / NCIMB 8303 / VKM B-1760 / Hildenborough) (Desulfovibrio vulgaris).